The chain runs to 394 residues: Argininosuccinate synthase (394 aa).

8–16 (AYSGGLDTS) contributes to the ATP binding site. 2 residues coordinate L-citrulline: Y86 and S91. G116 provides a ligand contact to ATP. Residues T118, N122, and D123 each contribute to the L-aspartate site. N122 provides a ligand contact to L-citrulline. 5 residues coordinate L-citrulline: R126, S172, S181, E256, and Y268.

This sequence belongs to the argininosuccinate synthase family. Type 1 subfamily. Homotetramer.

The protein localises to the cytoplasm. It catalyses the reaction L-citrulline + L-aspartate + ATP = 2-(N(omega)-L-arginino)succinate + AMP + diphosphate + H(+). The protein operates within amino-acid biosynthesis; L-arginine biosynthesis; L-arginine from L-ornithine and carbamoyl phosphate: step 2/3. This is Argininosuccinate synthase from Methanococcoides burtonii (strain DSM 6242 / NBRC 107633 / OCM 468 / ACE-M).